Here is a 531-residue protein sequence, read N- to C-terminus: SWI/SNF-related matrix-associated actin-dependent regulator of chromatin subfamily D member 2 (531 aa).

The tract at residues 20–85 (AVAAALGAPP…MSPGSRMPMA (66 aa)) is disordered. Residues 34–45 (PGMLPNPALRGP) are compositionally biased toward low complexity. Residues Arg81 and Arg104 each carry the asymmetric dimethylarginine modification. Residues 202-226 (FSPSKADGDNSGTAGTPGGTPAADK) are disordered. At Ser203 the chain carries Phosphoserine. Thr217 bears the Phosphothreonine mark. Residue Lys226 forms a Glycyl lysine isopeptide (Lys-Gly) (interchain with G-Cter in SUMO2) linkage. The SWIB/MDM2 domain occupies 306-383 (HQPPQYKLDP…PMKLAGLLQH (78 aa)).

It belongs to the SMARCD family. Component of the multiprotein chromatin-remodeling complexes SWI/SNF: SWI/SNF-A (BAF), SWI/SNF-B (PBAF) and related complexes. The canonical complex contains a catalytic subunit (either SMARCA4/BRG1/BAF190A or SMARCA2/BRM/BAF190B), and at least SMARCE1, ACTL6A/BAF53, SMARCC1/BAF155, SMARCC2/BAF170, and SMARCB1/SNF5/BAF47. Other subunits specific to each of the complexes may also be present permitting several possible combinations developmentally and tissue specific. Component of the BAF complex, which includes at least actin (ACTB), ARID1A/BAF250A, ARID1B/BAF250B, SMARCA2/BRM, SMARCA4/BRG1, ACTL6A/BAF53, ACTL6B/BAF53B, SMARCE1/BAF57, SMARCC1/BAF155, SMARCC2/BAF170, SMARCB1/SNF5/INI1, and one or more SMARCD1/BAF60A, SMARCD2/BAF60B, or SMARCD3/BAF60C. In muscle cells, the BAF complex also contains DPF3. Component of the SWI/SNF-B (PBAF) chromatin remodeling complex, at least composed of SMARCA4/BRG1, SMARCB1/BAF47/SNF5, ACTL6A/BAF53A or ACTL6B/BAF53B, SMARCE1/BAF57, SMARCD1/BAF60A, SMARCD2/BAF60B, perhaps SMARCD3/BAF60C, SMARCC1/BAF155, SMARCC2/BAF170, PBRM1/BAF180, ARID2/BAF200 and actin (ACTB). Interacts with UNKL. Interacts with CEBPE. In terms of processing, ubiquitinated through a signaling process involving RAC1 and the RING finger protein UNKL.

The protein localises to the nucleus. In terms of biological role, involved in transcriptional activation and repression of select genes by chromatin remodeling (alteration of DNA-nucleosome topology). Component of SWI/SNF chromatin remodeling complexes that carry out key enzymatic activities, changing chromatin structure by altering DNA-histone contacts within a nucleosome in an ATP-dependent manner. Critical regulator of myeloid differentiation, controlling granulocytopoiesis and the expression of genes involved in neutrophil granule formation. This Rattus norvegicus (Rat) protein is SWI/SNF-related matrix-associated actin-dependent regulator of chromatin subfamily D member 2 (Smarcd2).